The following is a 288-amino-acid chain: Protein shisa-2 (288 aa).

An N-terminal signal peptide occupies residues 1–23; the sequence is MWLEGSPLAVLAAVSFLLSVLAA. Topologically, residues 24-110 are extracellular; sequence AQGSGEYCHG…DSTAVPIYVP (87 aa). Residues 111 to 131 traverse the membrane as a helical segment; sequence FLIVGSVFVAFIIVGSLVAIC. At 132–288 the chain is on the cytoplasmic side; the sequence is CCRCLRPKQE…EQMMYPAVTV (157 aa). Low complexity predominate over residues 161 to 188; that stretch reads SSASTSRGSSSRQSSTAASSSSSANSGA. Residues 161-198 are disordered; the sequence is SSASTSRGSSSRQSSTAASSSSSANSGARPPPTRSQTN.

This sequence belongs to the shisa family. As to quaternary structure, interacts with fzd8 and fgfr1.

It is found in the endoplasmic reticulum membrane. Its function is as follows. Plays an essential role in the maturation of presomitic mesoderm cells by individual attenuation of both fgf and wnt signaling. Inhibits both wnt and fgf signaling through the regulation of protein maturation and cell surface transportation of their receptors within the endoplasmic reticulum. This chain is Protein shisa-2 (shisa2), found in Xenopus laevis (African clawed frog).